The primary structure comprises 583 residues: 2-succinyl-5-enolpyruvyl-6-hydroxy-3-cyclohexene-1-carboxylate synthase (583 aa).

It belongs to the TPP enzyme family. MenD subfamily. In terms of assembly, homodimer. It depends on Mg(2+) as a cofactor. Mn(2+) is required as a cofactor. The cofactor is thiamine diphosphate.

It catalyses the reaction isochorismate + 2-oxoglutarate + H(+) = 5-enolpyruvoyl-6-hydroxy-2-succinyl-cyclohex-3-ene-1-carboxylate + CO2. The protein operates within quinol/quinone metabolism; 1,4-dihydroxy-2-naphthoate biosynthesis; 1,4-dihydroxy-2-naphthoate from chorismate: step 2/7. It participates in quinol/quinone metabolism; menaquinone biosynthesis. Functionally, catalyzes the thiamine diphosphate-dependent decarboxylation of 2-oxoglutarate and the subsequent addition of the resulting succinic semialdehyde-thiamine pyrophosphate anion to isochorismate to yield 2-succinyl-5-enolpyruvyl-6-hydroxy-3-cyclohexene-1-carboxylate (SEPHCHC). This Chlorobium chlorochromatii (strain CaD3) protein is 2-succinyl-5-enolpyruvyl-6-hydroxy-3-cyclohexene-1-carboxylate synthase.